Here is a 468-residue protein sequence, read N- to C-terminus: Tyramine receptor tyra-2 (468 aa).

The Extracellular portion of the chain corresponds to 1 to 23 (MMSSYVMSPVDETYTLFQILKGS). Residues 24-43 (ALFLLVLWTIFANSLVFIVL) form a helical membrane-spanning segment. At 44–54 (YKNPRLQTVPN) the chain is on the cytoplasmic side. A helical transmembrane segment spans residues 55-77 (LLVGNLAFSDLALGLIVLPLSSV). Residues 78–91 (YAIAGEWVFPDALC) lie on the Extracellular side of the membrane. An intrachain disulfide couples C91 to C177. The chain crosses the membrane as a helical span at residues 92 to 114 (EVFVSADILCSTASIWNLSIVGL). At 115 to 134 (DRYWAITSPVAYMSKRNKRT) the chain is on the cytoplasmic side. Residues 135–157 (AGIMILSVWISSALISLAPLLGW) traverse the membrane as a helical segment. At 158 to 186 (KQTAQTPNLIYEKNNTVRQCTFLDLPSYT) the chain is on the extracellular side. N171 is a glycosylation site (N-linked (GlcNAc...) asparagine). A helical transmembrane segment spans residues 187–209 (VYSATGSFFIPTLLMFFVYFKIY). At 210–387 (QAFAKHRARQ…SAAKERRGVK (178 aa)) the chain is on the cytoplasmic side. The segment at 252–306 (DEFAKEEEEEEDSESSGQVENGLGNGNDAIIEEDECEDEDSDEKRDDHTSMTTVT) is disordered. Composition is skewed to acidic residues over residues 255–265 (AKEEEEEEDSE) and 281–292 (IIEEDECEDEDS). A helical transmembrane segment spans residues 388–410 (VLGIILGCFTVCWAPFFTMYVLV). Residues 411–424 (QFCKDCSPNAHIEM) lie on the Extracellular side of the membrane. The helical transmembrane segment at 425–444 (FITWLGYSNSAMNPIIYTVF) threads the bilayer. Residues 445 to 468 (NRDYQIALKRLFTSEKKPSSTSRV) lie on the Cytoplasmic side of the membrane.

It belongs to the G-protein coupled receptor 1 family. In terms of tissue distribution, expressed in the pharyngeal neurons, MCL/R and NSML/R and the AS group of amphidial sensory neurons, ASEL/R, AGSL/R, ASHL/R and ASIL/R.

It is found in the cell membrane. In terms of biological role, G-protein coupled receptor for tyramine, a known neurotransmitter and neuromodulator and direct precursor of octopamine. Expression in amphidial sensory neurons suggests a role in chemosensation. The sequence is that of Tyramine receptor tyra-2 (tyra-2) from Caenorhabditis elegans.